A 683-amino-acid polypeptide reads, in one-letter code: Transforming growth factor-beta-induced protein ig-h3 (683 aa).

Residues 1 to 23 (MALLMRLLTLALALSVGPAGTLA) form the signal peptide. Ser37 carries the phosphoserine modification. An EMI domain is found at 45–99 (GPNVCAVQKVIGTNKKYFTNCKQWYQRKICGKSTVISYECCPGYEKVPGEKGCPA). Disulfide bonds link Cys49/Cys85, Cys74/Cys339, Cys84/Cys97, Cys214/Cys317, and Cys473/Cys478. The residue at position 65 (Cys65) is an S-cysteinyl cysteine. FAS1 domains follow at residues 103–236 (LSNL…DKVI), 240–371 (TNNI…DELL), 375–498 (SAKT…DRML), and 502–632 (MGTV…NTVL). Residues 642–644 (RGD) carry the Cell attachment site motif.

As to quaternary structure, binds to type I, II, and IV collagens. Gamma-carboxylation is controversial. Gamma-carboxyglutamated; gamma-carboxyglutamate residues are formed by vitamin K dependent carboxylation; this may be required for calcium binding. According to a more recent report, does not contain vitamin K-dependent gamma-carboxyglutamate residues. In terms of processing, the EMI domain contains 2 expected intradomain disulfide bridges (Cys-49-Cys85 and Cys-84-Cys-97) and one unusual interdomain disulfide bridge to the second FAS1 domain (Cys-74-Cys-339). This arrangement violates the predicted disulfide bridge pattern of an EMI domain. As to expression, expressed in heart, kidney, liver, skeletal muscle, testis, thyroid and uterus.

It is found in the secreted. Its subcellular location is the extracellular space. It localises to the extracellular matrix. Its function is as follows. Plays a role in cell adhesion. May play a role in cell-collagen interactions. The chain is Transforming growth factor-beta-induced protein ig-h3 (Tgfbi) from Mus musculus (Mouse).